Reading from the N-terminus, the 447-residue chain is Argininosuccinate lyase (447 aa).

This sequence belongs to the lyase 1 family. Argininosuccinate lyase subfamily.

Its subcellular location is the cytoplasm. The enzyme catalyses 2-(N(omega)-L-arginino)succinate = fumarate + L-arginine. Its pathway is amino-acid biosynthesis; L-arginine biosynthesis; L-arginine from L-ornithine and carbamoyl phosphate: step 3/3. The sequence is that of Argininosuccinate lyase from Sulfolobus acidocaldarius (strain ATCC 33909 / DSM 639 / JCM 8929 / NBRC 15157 / NCIMB 11770).